Here is a 219-residue protein sequence, read N- to C-terminus: Ribosome maturation factor RimP (219 aa).

Disordered stretches follow at residues 1–38 (MTQR…LATR) and 189–219 (VEFT…DEER). The span at 198–219 (DAFDGTDEAGDFDDDDVEDEER) shows a compositional bias: acidic residues.

This sequence belongs to the RimP family.

The protein localises to the cytoplasm. Required for maturation of 30S ribosomal subunits. This Salinispora arenicola (strain CNS-205) protein is Ribosome maturation factor RimP.